We begin with the raw amino-acid sequence, 148 residues long: MEQALKQARLAFDKNEVPVGVVIVYRLNQKIIVSSHNNIEEKNNALCHAEIIAINEACNLISSKNLNDYDIYVTLEPCAMCASAISHSRLKRLFYGASDSKQGAVESNLRYFNSSACFHRPEIYSGILSEHSRFLMKEFFQKMRSTID.

The CMP/dCMP-type deaminase domain occupies 1–116 (MEQALKQARL…SNLRYFNSSA (116 aa)). Zn(2+) is bound at residue His-48. The active-site Proton donor is Glu-50. Residues Cys-78 and Cys-81 each coordinate Zn(2+).

It belongs to the cytidine and deoxycytidylate deaminase family. In terms of assembly, homodimer. Zn(2+) serves as cofactor.

The catalysed reaction is adenosine(34) in tRNA + H2O + H(+) = inosine(34) in tRNA + NH4(+). In terms of biological role, catalyzes the deamination of adenosine to inosine at the wobble position 34 of tRNA(Arg2). This is tRNA-specific adenosine deaminase from Rickettsia typhi (strain ATCC VR-144 / Wilmington).